The primary structure comprises 92 residues: Envelope glycoprotein J (92 aa).

Positions 1-22 (MDRYAVRTWGIVGILGCAAVGA) are cleaved as a signal peptide. Residues 23 to 49 (APTGPASDTTNATARLPTHPPLIRSGG) lie on the Extracellular side of the membrane. An N-linked (GlcNAc...) asparagine; by host glycan is attached at N33. The chain crosses the membrane as a helical span at residues 50-70 (FAVPLIVGGLCLMILGMACLL). At 71-92 (EVLRRLGRELARCCPHAGQFAP) the chain is on the cytoplasmic side.

Belongs to the alphaherpesvirinae glycoprotein J family.

Its subcellular location is the host Golgi apparatus membrane. The protein resides in the host endoplasmic reticulum membrane. The protein localises to the host endosome membrane. Functions as an activator of viral protein expression and virus production. In turn, promotes cell-to-cell spread as well as syncytia formation. The polypeptide is Envelope glycoprotein J (gJ) (Homo sapiens (Human)).